Reading from the N-terminus, the 937-residue chain is Inactive tyrosine-protein kinase transmembrane receptor ROR1 (937 aa).

The signal sequence occupies residues 1–29; the sequence is MHRPRRRGTRPPPLALLAALLLAARGADA. The Extracellular portion of the chain corresponds to 30-406; sequence QETELSVSAE…KEKNKMEILY (377 aa). One can recognise an Ig-like C2-type domain in the interval 42-141; that stretch reads PTSSWNTSSE…VATNGKKVVS (100 aa). Residues Asn47 and Asn66 are each glycosylated (N-linked (GlcNAc...) asparagine). 9 disulfide bridges follow: Cys79-Cys131, Cys170-Cys235, Cys178-Cys228, Cys219-Cys260, Cys248-Cys296, Cys252-Cys282, Cys313-Cys391, Cys334-Cys374, and Cys362-Cys386. The FZ domain occupies 165–299; it reads EEDGFCQPYR…SPEAANCIRI (135 aa). Asn184 is a glycosylation site (N-linked (GlcNAc...) asparagine). Residues 312-391 enclose the Kringle domain; that stretch reads KCYNSTGVDY…KSDLCDIPAC (80 aa). Asn315 carries N-linked (GlcNAc...) asparagine glycosylation. A helical transmembrane segment spans residues 407-427; sequence ILVPSVAIPLAIAFLFFFICV. The Cytoplasmic segment spans residues 428-937; that stretch reads CRNNQKSSSP…HTESMISAEV (510 aa). The region spanning 473–746 is the Protein kinase domain; that stretch reads VRFMEELGEC…PRFKDIHVRL (274 aa). ATP-binding positions include 479–487 and Lys506; that span reads LGECTFGKI. The residue at position 645 (Tyr645) is a Phosphotyrosine; by autocatalysis. Residues 753–762 show a composition bias toward low complexity; sequence SSHTSSTTPS. Disordered stretches follow at residues 753–778, 840–890, and 916–937; these read SSHTSSTTPSGGNATTQTTSLSASPV, GPPR…HMSI, and QSSLLGDSHIHGHTESMISAEV. The span at 763–778 shows a compositional bias: polar residues; it reads GGNATTQTTSLSASPV. Low complexity predominate over residues 854 to 864; that stretch reads RSPSSASGSTS. Over residues 865-880 the composition is skewed to polar residues; the sequence is TGHVASLPSSGSNQEA.

This sequence belongs to the protein kinase superfamily. Tyr protein kinase family. ROR subfamily. Interacts with ERBB2 and IGFBP5. As to expression, at postnatal P0, expressed in heart, lung, liver, kidney, spleen and inner ear.

The protein resides in the membrane. It localises to the cell projection. It is found in the axon. Functionally, has very low kinase activity in vitro and is unlikely to function as a tyrosine kinase in vivo. Receptor for ligand WNT5A which activate downstream NFkB signaling pathway and may result in the inhibition of WNT3A-mediated signaling. In inner ear, crucial for spiral ganglion neurons to innervate auditory hair cells. Via IGFBP5 ligand, forms a complex with ERBB2 to enhance CREB oncogenic signaling. The chain is Inactive tyrosine-protein kinase transmembrane receptor ROR1 (Ror1) from Mus musculus (Mouse).